The following is a 318-amino-acid chain: L-lactate dehydrogenase (318 aa).

NAD(+) is bound by residues valine 16, aspartate 37, and tyrosine 69. Substrate-binding positions include glutamine 86, arginine 92, and 124–127 (NPVD). Residues 122–124 (ASN) and serine 147 each bind NAD(+). 152–155 (DSAR) lines the substrate pocket. Catalysis depends on histidine 179, which acts as the Proton acceptor. Tyrosine 223 is subject to Phosphotyrosine. Position 232 (threonine 232) interacts with substrate.

Belongs to the LDH/MDH superfamily. LDH family. As to quaternary structure, homotetramer.

The protein localises to the cytoplasm. The enzyme catalyses (S)-lactate + NAD(+) = pyruvate + NADH + H(+). The protein operates within fermentation; pyruvate fermentation to lactate; (S)-lactate from pyruvate: step 1/1. Functionally, catalyzes the conversion of lactate to pyruvate. The chain is L-lactate dehydrogenase from Mycoplasma mycoides subsp. mycoides SC (strain CCUG 32753 / NCTC 10114 / PG1).